The primary structure comprises 984 residues: MQEHLVVTLDGKDYLVEPGTNLLEFIKSQDTFVPSICYNESMGPIQTCDTCTVEIDGKIERSCSTVIDRPMTVNTVNNDVKDAQKEALDRILEKHMLYCTVCDYNNGDCEIHNTMDAWGLQHQTYEYKEKPYEKDYGPFYRYDPNQCILCGRCVEACQDIEVNETIRIDWDREHPRVIWDNDVPINESSCVSCGQCATVCPCNAMMEVNMEGNAGYMTDTEPGSLAAMIDLTKKAEPGYGPLFAISDSEAEMRKERIKKTKTVCTYCGVGCSFEVWTKDREILKVQPSHDSPANKIATCVKGKFSWGHINSDQRLTKPLVRKNGEFHEVEWDEALNVIADNFTSIKEKYGPDALSFISSSKATNEESYLMQKLARQVIGTNNVDNCSRYCQAPATKGLFRTVGHGGDSGSIEDLEKAAMSVLIGTNTAEAHPVIASRMKRAQKLFGQKIHVFDIRKHEMAERADRFYQPKPGTDLAWLSAVTKYIIDHDLHDKAFIDEWVDDFDEYYKSLETFTMAFAEEATGIPESELIKFAEECAKAESVVICWAMGITQQDIGSDSSTAISNLLLVTGNYRRPGTGAYPLRGHNNVQGCSDMGSMPDKITGYQSIEADDIRAKFEKEYGVKLNPKAGKDNHEMVEGIHDGEVHSLYLYGEDTGIVDSNINFVQAAFEKLDFMVVQDEFLTFTATYADVVLPASPSLEKDGTFTNTERRIQRLYQALEPLGDSKPDWKIFQAIANRLGFDWNYKHPSEIMDEVARLTPLYAGVSYDRLEGFNSLQWPVQPDGTDEPILYLEGFNFDNGKAKLFPLSFDNYFKQDEIYDIHVNNGRLLEHFHEGNMTYQTPMIKYKVPRAFVEISPELAEDRGIHEGAEVKLISETGEAVLQVHVTDRVKGKEIYIPLNNDAMENGDLGAINLLTNSDVDQYTDTPSYKRTSCRLEVITKRGKSPLNPNNFRVNKKRHPQYSVQVQKKWERSDYVFPGNQVDK.

One can recognise a 2Fe-2S ferredoxin-type domain in the interval 3–79; the sequence is EHLVVTLDGK…PMTVNTVNND (77 aa). Cys-37, Cys-48, Cys-51, and Cys-63 together coordinate [2Fe-2S] cluster. The 41-residue stretch at 79-119 folds into the 4Fe-4S His(Cys)3-ligated-type domain; that stretch reads DVKDAQKEALDRILEKHMLYCTVCDYNNGDCEIHNTMDAWG. 16 residues coordinate [4Fe-4S] cluster: His-95, Cys-99, Cys-102, Cys-109, Cys-147, Cys-150, Cys-153, Cys-157, Cys-190, Cys-193, Cys-196, Cys-200, Cys-264, Cys-267, Cys-271, and Cys-299. 2 4Fe-4S ferredoxin-type domains span residues 138-165 and 181-211; these read PFYRYDPNQCILCGRCVEACQDIEVNET and NDVPINESSCVSCGQCATVCPCNAMMEVNME. The formate dehydrogenase stretch occupies residues 252–984; sequence MRKERIKKTK…YVFPGNQVDK (733 aa). One can recognise a 4Fe-4S Mo/W bis-MGD-type domain in the interval 257–313; that stretch reads IKKTKTVCTYCGVGCSFEVWTKDREILKVQPSHDSPANKIATCVKGKFSWGHINSDQ.

This sequence in the C-terminal section; belongs to the prokaryotic molybdopterin-containing oxidoreductase family. Requires [2Fe-2S] cluster as cofactor. [4Fe-4S] cluster is required as a cofactor. The cofactor is Mo-bis(molybdopterin guanine dinucleotide).

It carries out the reaction formate + NAD(+) = CO2 + NADH. The chain is Putative formate dehydrogenase SA2102 from Staphylococcus aureus (strain N315).